We begin with the raw amino-acid sequence, 438 residues long: Phosphoribosylamine--glycine ligase (438 aa).

Residues 108–316 form the ATP-grasp domain; sequence RTFMERNEIP…LLEVAEGIVD (209 aa). 135–194 lines the ATP pocket; the sequence is VDDFGRPVVVKPIGLTGGKGVKVVGYQLRDNEEAKSYAEELIRRDGRVLIEERTNGVEFT. 3 residues coordinate Mg(2+): glutamine 274, glutamate 286, and asparagine 288. Residues glutamine 274, glutamate 286, and asparagine 288 each coordinate Mn(2+).

The protein belongs to the GARS family. Mg(2+) is required as a cofactor. Mn(2+) serves as cofactor.

The catalysed reaction is 5-phospho-beta-D-ribosylamine + glycine + ATP = N(1)-(5-phospho-beta-D-ribosyl)glycinamide + ADP + phosphate + H(+). It participates in purine metabolism; IMP biosynthesis via de novo pathway; N(1)-(5-phospho-D-ribosyl)glycinamide from 5-phospho-alpha-D-ribose 1-diphosphate: step 2/2. The protein is Phosphoribosylamine--glycine ligase of Thermococcus gammatolerans (strain DSM 15229 / JCM 11827 / EJ3).